Here is a 225-residue protein sequence, read N- to C-terminus: NAD(P)H-hydrate epimerase (225 aa).

The YjeF N-terminal domain occupies 9–209 (MQTIDNYTVE…DIGLLTPQDF (201 aa)). 57–61 (NNGAD) is a binding site for (6S)-NADPHX. Residues Asn-58 and Asp-119 each contribute to the K(+) site. Residues 123–129 (GTGLNNL) and Asp-152 contribute to the (6S)-NADPHX site. Residue Thr-155 participates in K(+) binding.

It belongs to the NnrE/AIBP family. K(+) serves as cofactor.

The catalysed reaction is (6R)-NADHX = (6S)-NADHX. It carries out the reaction (6R)-NADPHX = (6S)-NADPHX. Catalyzes the epimerization of the S- and R-forms of NAD(P)HX, a damaged form of NAD(P)H that is a result of enzymatic or heat-dependent hydration. This is a prerequisite for the S-specific NAD(P)H-hydrate dehydratase to allow the repair of both epimers of NAD(P)HX. In Leuconostoc kimchii (strain IMSNU 11154 / KCTC 2386 / IH25), this protein is NAD(P)H-hydrate epimerase.